The sequence spans 968 residues: Sorting nexin-13 (968 aa).

A PXA domain is found at 97 to 284 (ANIIDEPLQQ…YVIWMIRDSN (188 aa)). Residues 373–496 (PLDSILVDNV…RKVYELMLRD (124 aa)) form the RGS domain. One can recognise a PX domain in the interval 570-691 (YADYDPYAVA…DFLENKAYSK (122 aa)). A 1,2-diacyl-sn-glycero-3-phospho-(1D-myo-inositol-3-phosphate) is bound by residues R612, S614, K639, and R653.

The protein belongs to the sorting nexin family.

It localises to the early endosome membrane. May be involved in several stages of intracellular trafficking. May play a role in endosome homeostasis. Acts as a GAP for Galphas. The polypeptide is Sorting nexin-13 (SNX13) (Homo sapiens (Human)).